The primary structure comprises 464 residues: Formin-like protein 19 (464 aa).

The tract at residues 1–74 is disordered; that stretch reads MSLVDISGAY…PRPCSRPPKT (74 aa). Pro residues predominate over residues 14-70; it reads PLPPPPPPLMRRRAPLPPPPPPPLMRRRAPPPPPPPLMRRRAPPPPPPPPLPRPCSR. The FH2 domain occupies 68–462; it reads CSRPPKTKCS…KAAKEAEMEK (395 aa).

Belongs to the formin-like family. Class-II subfamily.

The protein is Formin-like protein 19 (FH19) of Arabidopsis thaliana (Mouse-ear cress).